The following is an 89-amino-acid chain: Small ribosomal subunit protein uS15 (89 aa).

Belongs to the universal ribosomal protein uS15 family. Part of the 30S ribosomal subunit. Forms a bridge to the 50S subunit in the 70S ribosome, contacting the 23S rRNA.

Its function is as follows. One of the primary rRNA binding proteins, it binds directly to 16S rRNA where it helps nucleate assembly of the platform of the 30S subunit by binding and bridging several RNA helices of the 16S rRNA. Functionally, forms an intersubunit bridge (bridge B4) with the 23S rRNA of the 50S subunit in the ribosome. This Azoarcus sp. (strain BH72) protein is Small ribosomal subunit protein uS15.